The following is a 331-amino-acid chain: 6-phosphogluconolactonase (331 aa).

It belongs to the cycloisomerase 2 family.

It catalyses the reaction 6-phospho-D-glucono-1,5-lactone + H2O = 6-phospho-D-gluconate + H(+). The protein operates within carbohydrate degradation; pentose phosphate pathway; D-ribulose 5-phosphate from D-glucose 6-phosphate (oxidative stage): step 2/3. Catalyzes the hydrolysis of 6-phosphogluconolactone to 6-phosphogluconate. The protein is 6-phosphogluconolactonase of Citrobacter koseri (strain ATCC BAA-895 / CDC 4225-83 / SGSC4696).